Consider the following 139-residue polypeptide: ATP synthase epsilon chain (139 aa).

Belongs to the ATPase epsilon chain family. In terms of assembly, F-type ATPases have 2 components, CF(1) - the catalytic core - and CF(0) - the membrane proton channel. CF(1) has five subunits: alpha(3), beta(3), gamma(1), delta(1), epsilon(1). CF(0) has three main subunits: a, b and c.

It is found in the cell inner membrane. Produces ATP from ADP in the presence of a proton gradient across the membrane. In Shigella boydii serotype 18 (strain CDC 3083-94 / BS512), this protein is ATP synthase epsilon chain.